Here is a 365-residue protein sequence, read N- to C-terminus: Mannonate dehydratase 1 (365 aa).

The protein belongs to the mannonate dehydratase family. It depends on Fe(2+) as a cofactor. The cofactor is Mn(2+).

It carries out the reaction D-mannonate = 2-dehydro-3-deoxy-D-gluconate + H2O. It participates in carbohydrate metabolism; pentose and glucuronate interconversion. Catalyzes the dehydration of D-mannonate. The sequence is that of Mannonate dehydratase 1 from Bacillus licheniformis (strain ATCC 14580 / DSM 13 / JCM 2505 / CCUG 7422 / NBRC 12200 / NCIMB 9375 / NCTC 10341 / NRRL NRS-1264 / Gibson 46).